The following is a 156-amino-acid chain: ATP synthase subunit b (156 aa).

Residues Met-1 to Val-21 traverse the membrane as a helical segment.

Belongs to the ATPase B chain family. As to quaternary structure, F-type ATPases have 2 components, F(1) - the catalytic core - and F(0) - the membrane proton channel. F(1) has five subunits: alpha(3), beta(3), gamma(1), delta(1), epsilon(1). F(0) has three main subunits: a(1), b(2) and c(10-14). The alpha and beta chains form an alternating ring which encloses part of the gamma chain. F(1) is attached to F(0) by a central stalk formed by the gamma and epsilon chains, while a peripheral stalk is formed by the delta and b chains.

It localises to the cell inner membrane. Its function is as follows. F(1)F(0) ATP synthase produces ATP from ADP in the presence of a proton or sodium gradient. F-type ATPases consist of two structural domains, F(1) containing the extramembraneous catalytic core and F(0) containing the membrane proton channel, linked together by a central stalk and a peripheral stalk. During catalysis, ATP synthesis in the catalytic domain of F(1) is coupled via a rotary mechanism of the central stalk subunits to proton translocation. Component of the F(0) channel, it forms part of the peripheral stalk, linking F(1) to F(0). In Nitrosococcus oceani (strain ATCC 19707 / BCRC 17464 / JCM 30415 / NCIMB 11848 / C-107), this protein is ATP synthase subunit b.